The sequence spans 338 residues: UPF0194 membrane protein in asrC 5'region (338 aa).

The first 23 residues, 1–23, serve as a signal peptide directing secretion; it reads MAISPKKRALALVVVLIVAGAVA. Residues 148-207 are a coiled coil; the sequence is KQSLDNAAAALKTARANLDRAQQALTLAIKGPRKEDIAAARQQLQADKAGLSLARRELTD.

This sequence belongs to the UPF0194 family.

The protein resides in the periplasm. The polypeptide is UPF0194 membrane protein in asrC 5'region (Acidithiobacillus ferridurans).